The following is a 65-amino-acid chain: Large ribosomal subunit protein bL35 (65 aa).

Belongs to the bacterial ribosomal protein bL35 family.

The sequence is that of Large ribosomal subunit protein bL35 from Magnetococcus marinus (strain ATCC BAA-1437 / JCM 17883 / MC-1).